The sequence spans 227 residues: MKNCWFITGTDTNIGKTVSSIILLELARRYGYNTSGYKPIAAGCRTNDFKQYNSDAVLLRKFSTVKLSYQEVNPYLFIDPVCPFFTNEKNHMNVCMNKLSSGLQRLKKKSNWILIEGIGGLHTPFSNEFVMSDWIKKENLKTILVIGIKLGCINHAILTQKAILSSGLEFFGWIANYLLPTDTYNLTHIDILKKNMKSPYLGCIAYTPNIYNQIHHIPITIKLPLQN.

13–18 provides a ligand contact to ATP; it reads NIGKTV. T17 lines the Mg(2+) pocket. K38 is an active-site residue. Residues D55 and 116 to 119 contribute to the ATP site; that span reads EGIG. D55 and E116 together coordinate Mg(2+).

It belongs to the dethiobiotin synthetase family. Homodimer. Mg(2+) serves as cofactor.

It localises to the cytoplasm. The enzyme catalyses (7R,8S)-7,8-diammoniononanoate + CO2 + ATP = (4R,5S)-dethiobiotin + ADP + phosphate + 3 H(+). Its pathway is cofactor biosynthesis; biotin biosynthesis; biotin from 7,8-diaminononanoate: step 1/2. Functionally, catalyzes a mechanistically unusual reaction, the ATP-dependent insertion of CO2 between the N7 and N8 nitrogen atoms of 7,8-diaminopelargonic acid (DAPA, also called 7,8-diammoniononanoate) to form a ureido ring. The chain is ATP-dependent dethiobiotin synthetase BioD from Buchnera aphidicola subsp. Baizongia pistaciae (strain Bp).